The chain runs to 345 residues: Arginine-hydroxylase NDUFAF5, mitochondrial (345 aa).

Residues 1 to 36 (MLRPAGLWRLCRRPWAARVPAENLGRREVTSGVSPR) constitute a mitochondrion transit peptide.

This sequence belongs to the methyltransferase superfamily. As to quaternary structure, interacts with NDUFAF8, leading to stabilize NDUFAF5. Interacts with NDUFS7. Interacts with PYURF (via TRM112 domain); the interaction is direct and stabilizes NDUFAF5 protein.

The protein localises to the mitochondrion inner membrane. In terms of biological role, arginine hydroxylase that mediates hydroxylation of 'Arg-111' of NDUFS7 and is involved in the assembly of mitochondrial NADH:ubiquinone oxidoreductase complex (complex I, MT-ND1) at early stages. May also have methyltransferase activity. This is Arginine-hydroxylase NDUFAF5, mitochondrial from Homo sapiens (Human).